A 298-amino-acid polypeptide reads, in one-letter code: ATP phosphoribosyltransferase (298 aa).

This sequence belongs to the ATP phosphoribosyltransferase family. Long subfamily. It depends on Mg(2+) as a cofactor.

It localises to the cytoplasm. It catalyses the reaction 1-(5-phospho-beta-D-ribosyl)-ATP + diphosphate = 5-phospho-alpha-D-ribose 1-diphosphate + ATP. The protein operates within amino-acid biosynthesis; L-histidine biosynthesis; L-histidine from 5-phospho-alpha-D-ribose 1-diphosphate: step 1/9. With respect to regulation, feedback inhibited by histidine. Functionally, catalyzes the condensation of ATP and 5-phosphoribose 1-diphosphate to form N'-(5'-phosphoribosyl)-ATP (PR-ATP). Has a crucial role in the pathway because the rate of histidine biosynthesis seems to be controlled primarily by regulation of HisG enzymatic activity. The sequence is that of ATP phosphoribosyltransferase from Vibrio campbellii (strain ATCC BAA-1116).